The chain runs to 680 residues: DNA-directed RNA polymerase subunit beta' (680 aa).

4 residues coordinate Zn(2+): Cys69, Cys71, Cys87, and Cys90. Mg(2+)-binding residues include Asp489, Asp491, and Asp493.

It belongs to the RNA polymerase beta' chain family. RpoC1 subfamily. As to quaternary structure, in plastids the minimal PEP RNA polymerase catalytic core is composed of four subunits: alpha, beta, beta', and beta''. When a (nuclear-encoded) sigma factor is associated with the core the holoenzyme is formed, which can initiate transcription. Mg(2+) is required as a cofactor. Requires Zn(2+) as cofactor.

The protein resides in the plastid. It is found in the chloroplast. The catalysed reaction is RNA(n) + a ribonucleoside 5'-triphosphate = RNA(n+1) + diphosphate. DNA-dependent RNA polymerase catalyzes the transcription of DNA into RNA using the four ribonucleoside triphosphates as substrates. This Nasturtium officinale (Watercress) protein is DNA-directed RNA polymerase subunit beta'.